Reading from the N-terminus, the 372-residue chain is F-box/kelch-repeat protein At4g14905 (372 aa).

In terms of domain architecture, F-box spans 34–74 (LHDEIAVSCFARVPRCYYPAISLVCRNFRRLMASPEIYIER). Kelch repeat units lie at residues 137–183 (ETYV…LIDG), 184–229 (KLYV…FFVM), and 232–280 (KIYR…CMNQ).

The sequence is that of F-box/kelch-repeat protein At4g14905 from Arabidopsis thaliana (Mouse-ear cress).